The following is a 171-amino-acid chain: MISSLFFATKGFGLNLNLFETNVINLAVVIFGLYKFLPNFLGGILERRRSAILADLKDAEDRLTEANTALAKAKNELASAEQKAEKIRSDCKVRAEAIRLESEKKTVEEMARVKQGAAADLNAEASRVSTQLRREAAKLAIEKALVSLPNKLDEKAQLNFISQSIKNMGKD.

A helical transmembrane segment spans residues 12 to 34; it reads FGLNLNLFETNVINLAVVIFGLY.

Belongs to the ATPase B chain family. In terms of assembly, F-type ATPases have 2 components, F(1) - the catalytic core - and F(0) - the membrane proton channel. F(1) has five subunits: alpha(3), beta(3), gamma(1), delta(1), epsilon(1). F(0) has four main subunits: a(1), b(1), b'(1) and c(10-14). The alpha and beta chains form an alternating ring which encloses part of the gamma chain. F(1) is attached to F(0) by a central stalk formed by the gamma and epsilon chains, while a peripheral stalk is formed by the delta, b and b' chains.

The protein localises to the cellular thylakoid membrane. Functionally, f(1)F(0) ATP synthase produces ATP from ADP in the presence of a proton or sodium gradient. F-type ATPases consist of two structural domains, F(1) containing the extramembraneous catalytic core and F(0) containing the membrane proton channel, linked together by a central stalk and a peripheral stalk. During catalysis, ATP synthesis in the catalytic domain of F(1) is coupled via a rotary mechanism of the central stalk subunits to proton translocation. Its function is as follows. Component of the F(0) channel, it forms part of the peripheral stalk, linking F(1) to F(0). In Prochlorococcus marinus (strain MIT 9211), this protein is ATP synthase subunit b.